The primary structure comprises 484 residues: Aspartyl/glutamyl-tRNA(Asn/Gln) amidotransferase subunit B (484 aa).

Belongs to the GatB/GatE family. GatB subfamily. Heterotrimer of A, B and C subunits.

It carries out the reaction L-glutamyl-tRNA(Gln) + L-glutamine + ATP + H2O = L-glutaminyl-tRNA(Gln) + L-glutamate + ADP + phosphate + H(+). It catalyses the reaction L-aspartyl-tRNA(Asn) + L-glutamine + ATP + H2O = L-asparaginyl-tRNA(Asn) + L-glutamate + ADP + phosphate + 2 H(+). Allows the formation of correctly charged Asn-tRNA(Asn) or Gln-tRNA(Gln) through the transamidation of misacylated Asp-tRNA(Asn) or Glu-tRNA(Gln) in organisms which lack either or both of asparaginyl-tRNA or glutaminyl-tRNA synthetases. The reaction takes place in the presence of glutamine and ATP through an activated phospho-Asp-tRNA(Asn) or phospho-Glu-tRNA(Gln). The sequence is that of Aspartyl/glutamyl-tRNA(Asn/Gln) amidotransferase subunit B from Anaeromyxobacter sp. (strain K).